The sequence spans 404 residues: Cysteine desulfurase IscS (404 aa).

Residues 75–76 (AT), asparagine 155, glutamine 183, and 203–205 (SAH) contribute to the pyridoxal 5'-phosphate site. Lysine 206 is modified (N6-(pyridoxal phosphate)lysine). Threonine 243 provides a ligand contact to pyridoxal 5'-phosphate. Catalysis depends on cysteine 328, which acts as the Cysteine persulfide intermediate. Cysteine 328 is a binding site for [2Fe-2S] cluster.

The protein belongs to the class-V pyridoxal-phosphate-dependent aminotransferase family. NifS/IscS subfamily. Homodimer. Forms a heterotetramer with IscU, interacts with other sulfur acceptors. Requires pyridoxal 5'-phosphate as cofactor.

The protein localises to the cytoplasm. The catalysed reaction is (sulfur carrier)-H + L-cysteine = (sulfur carrier)-SH + L-alanine. It functions in the pathway cofactor biosynthesis; iron-sulfur cluster biosynthesis. Master enzyme that delivers sulfur to a number of partners involved in Fe-S cluster assembly, tRNA modification or cofactor biosynthesis. Catalyzes the removal of elemental sulfur atoms from cysteine to produce alanine. Functions as a sulfur delivery protein for Fe-S cluster synthesis onto IscU, an Fe-S scaffold assembly protein, as well as other S acceptor proteins. This is Cysteine desulfurase IscS from Shewanella piezotolerans (strain WP3 / JCM 13877).